Consider the following 159-residue polypeptide: MRIGHGFDVHAFGGEGPIIIGGVRIPYEKGLLAHSDGDVALHALTDALLGAAALGDIGKLFPDTDPAFKGADSRELLREAWRRIQAKGYTLGNVDVTIIAQAPKMLPHIPQMRVFIAEDLGCHMDDVNVKATTTEKLGFTGRGEGIACEAVALLIKATK.

Residues aspartate 8 and histidine 10 each coordinate a divalent metal cation. Residues aspartate 8–histidine 10 and histidine 34–serine 35 each bind 4-CDP-2-C-methyl-D-erythritol 2-phosphate. Residue histidine 42 coordinates a divalent metal cation. 4-CDP-2-C-methyl-D-erythritol 2-phosphate is bound by residues aspartate 56–glycine 58, phenylalanine 61–aspartate 65, alanine 100–leucine 106, threonine 132–glutamate 135, phenylalanine 139, and arginine 142.

Belongs to the IspF family. In terms of assembly, homotrimer. It depends on a divalent metal cation as a cofactor.

The enzyme catalyses 4-CDP-2-C-methyl-D-erythritol 2-phosphate = 2-C-methyl-D-erythritol 2,4-cyclic diphosphate + CMP. Its pathway is isoprenoid biosynthesis; isopentenyl diphosphate biosynthesis via DXP pathway; isopentenyl diphosphate from 1-deoxy-D-xylulose 5-phosphate: step 4/6. Involved in the biosynthesis of isopentenyl diphosphate (IPP) and dimethylallyl diphosphate (DMAPP), two major building blocks of isoprenoid compounds. Catalyzes the conversion of 4-diphosphocytidyl-2-C-methyl-D-erythritol 2-phosphate (CDP-ME2P) to 2-C-methyl-D-erythritol 2,4-cyclodiphosphate (ME-CPP) with a corresponding release of cytidine 5-monophosphate (CMP). The protein is 2-C-methyl-D-erythritol 2,4-cyclodiphosphate synthase of Escherichia coli O139:H28 (strain E24377A / ETEC).